Here is a 175-residue protein sequence, read N- to C-terminus: Peptide deformylase (175 aa).

Residues cysteine 99 and histidine 141 each coordinate Fe cation. Residue glutamate 142 is part of the active site. Residue histidine 145 participates in Fe cation binding.

The protein belongs to the polypeptide deformylase family. Requires Fe(2+) as cofactor.

It carries out the reaction N-terminal N-formyl-L-methionyl-[peptide] + H2O = N-terminal L-methionyl-[peptide] + formate. Functionally, removes the formyl group from the N-terminal Met of newly synthesized proteins. Requires at least a dipeptide for an efficient rate of reaction. N-terminal L-methionine is a prerequisite for activity but the enzyme has broad specificity at other positions. This Rickettsia akari (strain Hartford) protein is Peptide deformylase.